We begin with the raw amino-acid sequence, 800 residues long: DNA topoisomerase 4 subunit A (800 aa).

Residues 31-495 enclose the Topo IIA-type catalytic domain; that stretch reads LPDVRDGLKP…EIEEIKIDKE (465 aa). The active-site O-(5'-phospho-DNA)-tyrosine intermediate is the Tyr119.

Belongs to the type II topoisomerase GyrA/ParC subunit family. ParC type 2 subfamily. As to quaternary structure, heterotetramer composed of ParC and ParE.

It is found in the cell membrane. It carries out the reaction ATP-dependent breakage, passage and rejoining of double-stranded DNA.. Functionally, topoisomerase IV is essential for chromosome segregation. It relaxes supercoiled DNA. Performs the decatenation events required during the replication of a circular DNA molecule. This is DNA topoisomerase 4 subunit A from Staphylococcus aureus (strain MW2).